The sequence spans 78 residues: Large ribosomal subunit protein bL28 (78 aa).

It belongs to the bacterial ribosomal protein bL28 family.

This Synechococcus sp. (strain JA-2-3B'a(2-13)) (Cyanobacteria bacterium Yellowstone B-Prime) protein is Large ribosomal subunit protein bL28.